We begin with the raw amino-acid sequence, 499 residues long: Kynurenine 3-monooxygenase 3 (499 aa).

The protein belongs to the aromatic-ring hydroxylase family. KMO subfamily. It depends on FAD as a cofactor.

Its subcellular location is the mitochondrion outer membrane. The catalysed reaction is L-kynurenine + NADPH + O2 + H(+) = 3-hydroxy-L-kynurenine + NADP(+) + H2O. It participates in cofactor biosynthesis; NAD(+) biosynthesis; quinolinate from L-kynurenine: step 1/3. Functionally, catalyzes the hydroxylation of L-kynurenine (L-Kyn) to form 3-hydroxy-L-kynurenine (L-3OHKyn). Required for synthesis of quinolinic acid. This is Kynurenine 3-monooxygenase 3 (bna4-3) from Aspergillus niger (strain ATCC MYA-4892 / CBS 513.88 / FGSC A1513).